A 416-amino-acid polypeptide reads, in one-letter code: Serine hydroxymethyltransferase (416 aa).

Residues leucine 121 and 125-127 (GHL) each bind (6S)-5,6,7,8-tetrahydrofolate. Position 230 is an N6-(pyridoxal phosphate)lysine (lysine 230).

It belongs to the SHMT family. In terms of assembly, homodimer. Requires pyridoxal 5'-phosphate as cofactor.

Its subcellular location is the cytoplasm. It carries out the reaction (6R)-5,10-methylene-5,6,7,8-tetrahydrofolate + glycine + H2O = (6S)-5,6,7,8-tetrahydrofolate + L-serine. It participates in one-carbon metabolism; tetrahydrofolate interconversion. It functions in the pathway amino-acid biosynthesis; glycine biosynthesis; glycine from L-serine: step 1/1. Functionally, catalyzes the reversible interconversion of serine and glycine with tetrahydrofolate (THF) serving as the one-carbon carrier. This reaction serves as the major source of one-carbon groups required for the biosynthesis of purines, thymidylate, methionine, and other important biomolecules. Also exhibits THF-independent aldolase activity toward beta-hydroxyamino acids, producing glycine and aldehydes, via a retro-aldol mechanism. This is Serine hydroxymethyltransferase from Nitrosospira multiformis (strain ATCC 25196 / NCIMB 11849 / C 71).